Consider the following 438-residue polypeptide: PHAF1 protein CG7083 (438 aa).

Belongs to the PHAF1 family.

It is found in the cytoplasm. Its subcellular location is the preautophagosomal structure. May play a regulatory role in autophagic activity. The protein is PHAF1 protein CG7083 of Drosophila melanogaster (Fruit fly).